The sequence spans 185 residues: Sulfopyruvate decarboxylase subunit beta (185 aa).

This sequence belongs to the TPP enzyme family. As to quaternary structure, heterododecamer composed of 6 subunits alpha and 6 subunits beta. Requires thiamine diphosphate as cofactor.

It catalyses the reaction 3-sulfopyruvate + H(+) = sulfoacetaldehyde + CO2. It functions in the pathway cofactor biosynthesis; coenzyme M biosynthesis; sulfoacetaldehyde from phosphoenolpyruvate and sulfite: step 4/4. Involved in the biosynthesis of the coenzyme M (2-mercaptoethanesulfonic acid). Catalyzes the decarboxylation of sulfopyruvate to sulfoacetaldehyde. The polypeptide is Sulfopyruvate decarboxylase subunit beta (Methanothermobacter thermautotrophicus (strain ATCC 29096 / DSM 1053 / JCM 10044 / NBRC 100330 / Delta H) (Methanobacterium thermoautotrophicum)).